The chain runs to 120 residues: MARIAGVDLPQKKRIEYALTYIYGIGLTTSRKILDRTGIDYNTRVHELTDAQAATIRNDIQENVMVEGDLRKKVTLDIKALMDLGSYRGLRHRRGLPCRGQKTKTNARTRKGKRKTVGAA.

The segment at 93–120 (RRGLPCRGQKTKTNARTRKGKRKTVGAA) is disordered.

It belongs to the universal ribosomal protein uS13 family. Part of the 30S ribosomal subunit. Forms a loose heterodimer with protein S19. Forms two bridges to the 50S subunit in the 70S ribosome.

Functionally, located at the top of the head of the 30S subunit, it contacts several helices of the 16S rRNA. In the 70S ribosome it contacts the 23S rRNA (bridge B1a) and protein L5 of the 50S subunit (bridge B1b), connecting the 2 subunits; these bridges are implicated in subunit movement. Contacts the tRNAs in the A and P-sites. The chain is Small ribosomal subunit protein uS13 from Sulfurovum sp. (strain NBC37-1).